The sequence spans 100 residues: Aspartyl/glutamyl-tRNA(Asn/Gln) amidotransferase subunit C (100 aa).

Belongs to the GatC family. As to quaternary structure, heterotrimer of A, B and C subunits.

The enzyme catalyses L-glutamyl-tRNA(Gln) + L-glutamine + ATP + H2O = L-glutaminyl-tRNA(Gln) + L-glutamate + ADP + phosphate + H(+). It carries out the reaction L-aspartyl-tRNA(Asn) + L-glutamine + ATP + H2O = L-asparaginyl-tRNA(Asn) + L-glutamate + ADP + phosphate + 2 H(+). Allows the formation of correctly charged Asn-tRNA(Asn) or Gln-tRNA(Gln) through the transamidation of misacylated Asp-tRNA(Asn) or Glu-tRNA(Gln) in organisms which lack either or both of asparaginyl-tRNA or glutaminyl-tRNA synthetases. The reaction takes place in the presence of glutamine and ATP through an activated phospho-Asp-tRNA(Asn) or phospho-Glu-tRNA(Gln). The polypeptide is Aspartyl/glutamyl-tRNA(Asn/Gln) amidotransferase subunit C (Erythrobacter litoralis (strain HTCC2594)).